The chain runs to 1414 residues: DNA-directed RNA polymerase subunit beta' (1414 aa).

Cysteine 70, cysteine 72, cysteine 85, and cysteine 88 together coordinate Zn(2+). Positions 460, 462, and 464 each coordinate Mg(2+). The Zn(2+) site is built by cysteine 814, cysteine 888, cysteine 895, and cysteine 898. Low complexity predominate over residues 1392–1403 (EQALSEALKSSA). Positions 1392–1414 (EQALSEALKSSAPQEAKAAQKDE) are disordered.

The protein belongs to the RNA polymerase beta' chain family. The RNAP catalytic core consists of 2 alpha, 1 beta, 1 beta' and 1 omega subunit. When a sigma factor is associated with the core the holoenzyme is formed, which can initiate transcription. Mg(2+) is required as a cofactor. Zn(2+) serves as cofactor.

The catalysed reaction is RNA(n) + a ribonucleoside 5'-triphosphate = RNA(n+1) + diphosphate. DNA-dependent RNA polymerase catalyzes the transcription of DNA into RNA using the four ribonucleoside triphosphates as substrates. The protein is DNA-directed RNA polymerase subunit beta' of Coxiella burnetii (strain Dugway 5J108-111).